We begin with the raw amino-acid sequence, 229 residues long: Putative N-acetylmannosamine-6-phosphate 2-epimerase (229 aa).

Belongs to the NanE family.

It catalyses the reaction an N-acyl-D-glucosamine 6-phosphate = an N-acyl-D-mannosamine 6-phosphate. The protein operates within amino-sugar metabolism; N-acetylneuraminate degradation; D-fructose 6-phosphate from N-acetylneuraminate: step 3/5. Its function is as follows. Converts N-acetylmannosamine-6-phosphate (ManNAc-6-P) to N-acetylglucosamine-6-phosphate (GlcNAc-6-P). The sequence is that of Putative N-acetylmannosamine-6-phosphate 2-epimerase from Salmonella arizonae (strain ATCC BAA-731 / CDC346-86 / RSK2980).